Reading from the N-terminus, the 875-residue chain is Leucine--tRNA ligase (875 aa).

The 'HIGH' region motif lies at 43–53 (PYPSGRIHMGH). The 'KMSKS' region signature appears at 633–637 (KMSKS). Lys636 lines the ATP pocket.

This sequence belongs to the class-I aminoacyl-tRNA synthetase family.

The protein resides in the cytoplasm. The enzyme catalyses tRNA(Leu) + L-leucine + ATP = L-leucyl-tRNA(Leu) + AMP + diphosphate. In Bartonella bacilliformis (strain ATCC 35685 / KC583 / Herrer 020/F12,63), this protein is Leucine--tRNA ligase.